The sequence spans 209 residues: Tumor suppressor candidate gene 1 protein (209 aa).

3 disordered regions span residues 1 to 55, 111 to 157, and 172 to 209; these read MWRM…DGAR, ALRL…LRAR, and LHLE…GPWL. A compositionally biased stretch (gly residues) spans 14–47; that stretch reads CCGGDGAADGRGPGRSGRARGGGSPSGGGGGVGW. Residues 70 to 114 are a coiled coil; sequence LEAIRARDEWDRQNARLRQENARLRLENRRLKRENRSLFRQALRL. Basic and acidic residues predominate over residues 125 to 149; that stretch reads EARRVPEEASTNRRARDSGREDEPG. Position 150 is a phosphoserine (S150). Positions 152–177 form a coiled coil; it reads RALRARLEKLEAMYRRALLQLHLEQR. The span at 174-188 shows a compositional bias: basic and acidic residues; the sequence is LEQRGPRPSGDKEEQ.

As to expression, widely expressed at low level. Expressed at higher level in testis, weakly expressed in muscle, colon, lung and spleen. Not detected in 3 non small cell lung carcinoma (NSCLC) cell lines with homozygous deletion of the 9p region, while it is down-regulated in 3 other tumor cell lines.

This Homo sapiens (Human) protein is Tumor suppressor candidate gene 1 protein (TUSC1).